The following is a 161-amino-acid chain: Phosphopantetheine adenylyltransferase (161 aa).

Ser11 contributes to the substrate binding site. ATP is bound by residues 11–12 (SF) and His19. Substrate contacts are provided by Lys43, Leu75, and Arg89. ATP is bound by residues 90 to 92 (GLR), Glu100, and 125 to 131 (YSFISSS).

This sequence belongs to the bacterial CoaD family. Homohexamer. Mg(2+) serves as cofactor.

It localises to the cytoplasm. The enzyme catalyses (R)-4'-phosphopantetheine + ATP + H(+) = 3'-dephospho-CoA + diphosphate. It participates in cofactor biosynthesis; coenzyme A biosynthesis; CoA from (R)-pantothenate: step 4/5. In terms of biological role, reversibly transfers an adenylyl group from ATP to 4'-phosphopantetheine, yielding dephospho-CoA (dPCoA) and pyrophosphate. The protein is Phosphopantetheine adenylyltransferase of Staphylococcus epidermidis (strain ATCC 35984 / DSM 28319 / BCRC 17069 / CCUG 31568 / BM 3577 / RP62A).